Here is a 211-residue protein sequence, read N- to C-terminus: uncharacterized protein (211 aa).

Composition is skewed to low complexity over residues 1 to 19 (MQDP…SSSD) and 61 to 74 (SPSV…SSNA). 2 disordered regions span residues 1–27 (MQDP…STGS) and 54–94 (ASSR…EPHR).

Interacts with RLK902. As to expression, expressed in inflorescences, stems, rosette leaves and weakly in roots.

This is an uncharacterized protein from Arabidopsis thaliana (Mouse-ear cress).